The sequence spans 337 residues: Cytoskeleton protein RodZ (337 aa).

Residues 1–111 (MNTEATHDQN…LGKRRKKRDG (111 aa)) are Cytoplasmic-facing. Residues 19–71 (LRNAREQLGLSQQAVAERLCLKVSTVRDIEEDKAPADLASTFLRGYIRSYARL) form the HTH cro/C1-type domain. A DNA-binding region (H-T-H motif) is located at residues 30-49 (QQAVAERLCLKVSTVRDIEE). Residues 112–132 (WLMTFTWLVLFVVIGLSGAWW) traverse the membrane as a helical; Signal-anchor for type II membrane protein segment. Topologically, residues 133–337 (WQDHKAQQEE…TLNAEQSPAQ (205 aa)) are periplasmic. Residues 145-167 (TMADQSSAELSSNSEQGQSVPLN) show a composition bias toward polar residues. The segment at 145–236 (TMADQSSAEL…TAATTPDGAA (92 aa)) is disordered. Residues 168–207 (TSTTTDPATTSTPPASVDTTATNTQTPAVTAPAPAVDPQQ) are compositionally biased toward low complexity. Polar residues predominate over residues 208-218 (NAVVSPSQANV). The segment covering 219–236 (DTAATPAPTAATTPDGAA) has biased composition (low complexity).

This sequence belongs to the RodZ family.

The protein localises to the cell inner membrane. Functionally, cytoskeletal protein that is involved in cell-shape control through regulation of the length of the long axis. This Escherichia coli O139:H28 (strain E24377A / ETEC) protein is Cytoskeleton protein RodZ.